The sequence spans 592 residues: A-type ATP synthase subunit A (592 aa).

ATP is bound at residue 233-240 (GPFGSGKT).

Belongs to the ATPase alpha/beta chains family. In terms of assembly, has multiple subunits with at least A(3), B(3), C, D, E, F, H, I and proteolipid K(x).

The protein resides in the cell membrane. The enzyme catalyses ATP + H2O + 4 H(+)(in) = ADP + phosphate + 5 H(+)(out). In terms of biological role, component of the A-type ATP synthase that produces ATP from ADP in the presence of a proton gradient across the membrane. The A chain is the catalytic subunit. The polypeptide is A-type ATP synthase subunit A (Saccharolobus islandicus (strain Y.N.15.51 / Yellowstone #2) (Sulfolobus islandicus)).